An 881-amino-acid polypeptide reads, in one-letter code: Mechanosensitive ion channel protein 4 (881 aa).

A disordered region spans residues 35–245 (FWHNDKSSKP…EEEDPFSEED (211 aa)). Residues 56–66 (FMRRSSEKSEE) are compositionally biased toward basic and acidic residues. Polar residues-rich tracts occupy residues 73–82 (LINQFLNKQK), 100–118 (QKNTVPPLSSTAVSGSASP), and 206–230 (TPRSGNLNPGFSGRNTKPGTPNQGG). The segment covering 234-245 (LEEEEDPFSEED) has biased composition (acidic residues). The next 4 membrane-spanning stretches (helical) occupy residues 255–275 (ICVWVIIEWIFLILIIASLIC), 297–317 (VMVLVLICGRLVSSWIVKLFV), 339–359 (KPVQNCLWLGLVLIAWHFLFD), and 377–397 (VLICLLVAVIIWLIKTLLVKV). A disordered region spans residues 457-501 (GPKAVSSPPQVTVGSGRLQKSPSRVGKSPVLSRSGSKKEGGEEGI). Over residues 463–478 (SPPQVTVGSGRLQKSP) the composition is skewed to polar residues. The span at 492–501 (SKKEGGEEGI) shows a compositional bias: basic and acidic residues. 2 helical membrane-spanning segments follow: residues 643-663 (IVDVLVSIVILIIWLLILGIA) and 678-698 (VVFVFGNSCKTIFEAVIFVFV).

It belongs to the MscS (TC 1.A.23) family.

It localises to the membrane. Mechanosensitive channel that opens in response to stretch forces in the membrane lipid bilayer. In Arabidopsis thaliana (Mouse-ear cress), this protein is Mechanosensitive ion channel protein 4 (MSL4).